A 317-amino-acid polypeptide reads, in one-letter code: Lipase 1 (317 aa).

The signal sequence occupies residues 1 to 18 (MLLKRLCFAALFSLSMVG). Cys19 carries N-palmitoyl cysteine lipidation. Cys19 carries the S-diacylglycerol cysteine lipid modification. An AB hydrolase-1 domain is found at 69–296 (PLLLIHGFGG…MEDVGHVPMV (228 aa)). His74 is an active-site residue. Ser142 (nucleophile) is an active-site residue. Residues Glu270 and His292 each act as charge relay system in the active site.

The protein localises to the cell outer membrane. It carries out the reaction a triacylglycerol + H2O = a diacylglycerol + a fatty acid + H(+). This Psychrobacter immobilis protein is Lipase 1 (lip1).